The following is a 285-amino-acid chain: Transcription factor MYB15 (285 aa).

2 HTH myb-type domains span residues 9 to 61 (KMGL…MNYL) and 62 to 116 (KPDI…KKRL). 2 consecutive DNA-binding regions (H-T-H motif) follow at residues 37 to 61 (WRALPKQAGLLRCGKSCRLRWMNYL) and 89 to 112 (WSAIAAKLPGRTDNEIKNVWHTHL). Positions 115 to 172 (RLEDYQPAKPKTSNKKKGTKPKSESVITSSNSTRSESELADSSNPSGESLFSTSPSTS) are disordered. Over residues 139–158 (SVITSSNSTRSESELADSSN) the composition is skewed to polar residues. Residues 159-172 (PSGESLFSTSPSTS) show a composition bias toward low complexity.

Interacts with SCRM/ICE1. Expressed in roots, leaves, stems and flowers. Expressed in stomatal guard cells.

It localises to the nucleus. Functionally, transcription factor involved in cold-regulation of CBF genes and in the development of freezing tolerance. May be part of a complex network of transcription factors controlling the expression of CBF genes and other genes in response to cold stress. Binds to the MYB recognition sequences in the promoters of CBF1, CBF2 and CBF3 genes. Involved in drought and salt tolerance. May enhance expression levels of genes involved in abscisic acid (ABA) biosynthesis and signaling, as well as those encoding stress-protective proteins. In Arabidopsis thaliana (Mouse-ear cress), this protein is Transcription factor MYB15.